Here is a 270-residue protein sequence, read N- to C-terminus: Putative F-box protein At3g24700 (270 aa).

Residues 1–45 (MLTDLPLDLESEILSRVPATSLQRLKTTCKRWYALFRDPRFVKKN) form the F-box domain.

The polypeptide is Putative F-box protein At3g24700 (Arabidopsis thaliana (Mouse-ear cress)).